We begin with the raw amino-acid sequence, 510 residues long: NAD(P)H-quinone oxidoreductase subunit 2 B, chloroplastic (510 aa).

Helical transmembrane passes span 24–44 (LLLF…GLIL), 59–79 (WFYF…LFRW), 99–119 (IFQF…VEYI), 124–144 (MAIT…MFLC), 150–170 (ITIF…SGYT), 184–204 (LLMG…LYGL), 229–249 (ISIA…LAPF), 295–315 (WHLL…LIAI), 323–343 (MLAY…IVGD), 354–374 (YMLF…LFGL), 395–415 (ALSL…AGFF), 418–438 (LHLF…IGLL), and 484–504 (MIVC…ILAI).

Belongs to the complex I subunit 2 family. NDH is composed of at least 16 different subunits, 5 of which are encoded in the nucleus.

Its subcellular location is the plastid. The protein resides in the chloroplast thylakoid membrane. The enzyme catalyses a plastoquinone + NADH + (n+1) H(+)(in) = a plastoquinol + NAD(+) + n H(+)(out). The catalysed reaction is a plastoquinone + NADPH + (n+1) H(+)(in) = a plastoquinol + NADP(+) + n H(+)(out). Its function is as follows. NDH shuttles electrons from NAD(P)H:plastoquinone, via FMN and iron-sulfur (Fe-S) centers, to quinones in the photosynthetic chain and possibly in a chloroplast respiratory chain. The immediate electron acceptor for the enzyme in this species is believed to be plastoquinone. Couples the redox reaction to proton translocation, and thus conserves the redox energy in a proton gradient. The protein is NAD(P)H-quinone oxidoreductase subunit 2 B, chloroplastic of Acorus calamus (Sweet flag).